Consider the following 83-residue polypeptide: Small ribosomal subunit protein bS16 (83 aa).

Belongs to the bacterial ribosomal protein bS16 family.

The sequence is that of Small ribosomal subunit protein bS16 from Pseudomonas entomophila (strain L48).